The primary structure comprises 507 residues: UDP-N-acetylglucosamine 1-carboxyvinyltransferase 1 (507 aa).

Phosphoenolpyruvate is bound at residue 41–42; the sequence is KN. Arginine 112 contributes to the UDP-N-acetyl-alpha-D-glucosamine binding site. Cysteine 136 functions as the Proton donor in the catalytic mechanism. Residue cysteine 136 is modified to 2-(S-cysteinyl)pyruvic acid O-phosphothioketal. UDP-N-acetyl-alpha-D-glucosamine-binding positions include 141–145, aspartate 328, and leucine 350; that span reads RPIDL.

Belongs to the EPSP synthase family. MurA subfamily.

It is found in the cytoplasm. The enzyme catalyses phosphoenolpyruvate + UDP-N-acetyl-alpha-D-glucosamine = UDP-N-acetyl-3-O-(1-carboxyvinyl)-alpha-D-glucosamine + phosphate. Its pathway is cell wall biogenesis; peptidoglycan biosynthesis. Its function is as follows. Cell wall formation. Adds enolpyruvyl to UDP-N-acetylglucosamine. The polypeptide is UDP-N-acetylglucosamine 1-carboxyvinyltransferase 1 (Legionella pneumophila (strain Lens)).